Consider the following 735-residue polypeptide: Transcription initiation factor IIF subunit alpha (735 aa).

Disordered regions lie at residues 1–68 (MSRR…EYAE), 165–263 (EYKK…TANL), 297–323 (NEPEFEEGTMDPLADVAPDGGGRAKRG), 446–465 (KAVADQQAMDEDDRDDNSEV), 471–606 (EEFA…HKEP), and 631–674 (PEGE…EETP). Residues 33 to 54 (RMRMGQNGSNSSSPGVPNGDNS) show a composition bias toward low complexity. Composition is skewed to basic and acidic residues over residues 59 to 68 (VKKDDPEYAE) and 165 to 174 (EYKKKAEQER). Positions 175–219 (STPNSGGMNKSGTVSLNNTVKDGSQTPTVDSVTKDNTANGVNSSI) are enriched in polar residues. Residue Ser-198 is modified to Phosphoserine. Thr-200 carries the post-translational modification Phosphothreonine. Low complexity predominate over residues 220 to 238 (PTVTGSSVPPASPTTVSAV). A compositionally biased stretch (polar residues) spans 239–263 (ESNGLSNGSTSAANGLDGNASTANL). Acidic residues-rich tracts occupy residues 453-465 (AMDEDDRDDNSEV) and 471-480 (EEFADDEEAP). Positions 487-500 (QENKESEQRIKKEM) are enriched in basic and acidic residues. The span at 513 to 522 (APSENEEDEL) shows a compositional bias: acidic residues. Position 515 is a phosphoserine (Ser-515). The span at 523 to 536 (FGEKKIDEDGERIK) shows a compositional bias: basic and acidic residues. Ser-560, Ser-562, and Ser-571 each carry phosphoserine. Over residues 564 to 583 (IENKENESPVKKEEDSDTLS) the composition is skewed to basic and acidic residues. Residues 584-595 (KSKRSSPKKQQK) show a composition bias toward basic residues. Positions 636 to 654 (NPQTTKAVDSSNNASNTVP) are enriched in polar residues. Phosphoserine is present on Ser-655.

This sequence belongs to the TFIIF alpha subunit family. As to quaternary structure, TFIIF is composed of three different subunits: TFG1/RAP74, TFG2/RAP30 and TAF14. Post-translationally, phosphorylated on Ser and other residues by TAF1 and casein kinase II-like kinases.

It localises to the nucleus. Its function is as follows. TFIIF is a general transcription initiation factor that binds to RNA polymerase II. Its functions include the recruitment of RNA polymerase II to the promoter bound DNA-TBP-TFIIB complex, decreasing the affinity of RNA polymerase II for non-specific DNA, allowing for the subsequent recruitment of TFIIE and TFIIH, and facilitating RNA polymerase II elongation. The sequence is that of Transcription initiation factor IIF subunit alpha (TFG1) from Saccharomyces cerevisiae (strain ATCC 204508 / S288c) (Baker's yeast).